The following is a 288-amino-acid chain: Phosphatidylserine decarboxylase proenzyme (288 aa).

Residues Asp92, His149, and Ser254 each act as charge relay system; for autoendoproteolytic cleavage activity in the active site. The active-site Schiff-base intermediate with substrate; via pyruvic acid; for decarboxylase activity is Ser254. Ser254 is subject to Pyruvic acid (Ser); by autocatalysis.

The protein belongs to the phosphatidylserine decarboxylase family. PSD-B subfamily. Prokaryotic type I sub-subfamily. In terms of assembly, heterodimer of a large membrane-associated beta subunit and a small pyruvoyl-containing alpha subunit. Pyruvate serves as cofactor. Post-translationally, is synthesized initially as an inactive proenzyme. Formation of the active enzyme involves a self-maturation process in which the active site pyruvoyl group is generated from an internal serine residue via an autocatalytic post-translational modification. Two non-identical subunits are generated from the proenzyme in this reaction, and the pyruvate is formed at the N-terminus of the alpha chain, which is derived from the carboxyl end of the proenzyme. The autoendoproteolytic cleavage occurs by a canonical serine protease mechanism, in which the side chain hydroxyl group of the serine supplies its oxygen atom to form the C-terminus of the beta chain, while the remainder of the serine residue undergoes an oxidative deamination to produce ammonia and the pyruvoyl prosthetic group on the alpha chain. During this reaction, the Ser that is part of the protease active site of the proenzyme becomes the pyruvoyl prosthetic group, which constitutes an essential element of the active site of the mature decarboxylase.

It localises to the cell membrane. The enzyme catalyses a 1,2-diacyl-sn-glycero-3-phospho-L-serine + H(+) = a 1,2-diacyl-sn-glycero-3-phosphoethanolamine + CO2. The protein operates within phospholipid metabolism; phosphatidylethanolamine biosynthesis; phosphatidylethanolamine from CDP-diacylglycerol: step 2/2. Its function is as follows. Catalyzes the formation of phosphatidylethanolamine (PtdEtn) from phosphatidylserine (PtdSer). This chain is Phosphatidylserine decarboxylase proenzyme, found in Bordetella petrii (strain ATCC BAA-461 / DSM 12804 / CCUG 43448).